The primary structure comprises 196 residues: Small ribosomal subunit protein uS4c (196 aa).

Positions 15–36 are disordered; the sequence is LGTLPGLTSKRPRSGSDLKNPL. Residues 89 to 150 enclose the S4 RNA-binding domain; that stretch reads MRLDNILFRL…KQRSKALIQN (62 aa).

This sequence belongs to the universal ribosomal protein uS4 family. As to quaternary structure, part of the 30S ribosomal subunit. Contacts protein S5. The interaction surface between S4 and S5 is involved in control of translational fidelity.

It is found in the plastid. Its subcellular location is the chloroplast. Its function is as follows. One of the primary rRNA binding proteins, it binds directly to 16S rRNA where it nucleates assembly of the body of the 30S subunit. With S5 and S12 plays an important role in translational accuracy. The sequence is that of Small ribosomal subunit protein uS4c (rps4) from Yucca filamentosa (Bear-grass).